A 167-amino-acid polypeptide reads, in one-letter code: Probable chemoreceptor glutamine deamidase CheD (167 aa).

Belongs to the CheD family.

The catalysed reaction is L-glutaminyl-[protein] + H2O = L-glutamyl-[protein] + NH4(+). In terms of biological role, probably deamidates glutamine residues to glutamate on methyl-accepting chemotaxis receptors (MCPs), playing an important role in chemotaxis. The chain is Probable chemoreceptor glutamine deamidase CheD from Moorella thermoacetica (strain ATCC 39073 / JCM 9320).